The following is a 266-amino-acid chain: Esterase AGAP003155 (266 aa).

Residues serine 114, aspartate 172, and histidine 199 each act as charge relay system in the active site. The tract at residues 231 to 266 is disordered; sequence ATEENSFHLEGQEEAEESALQPVHEGLQNGSDSDSD.

It belongs to the LovG family.

The sequence is that of Esterase AGAP003155 from Anopheles gambiae (African malaria mosquito).